Reading from the N-terminus, the 225-residue chain is UPF0758 protein BP1235 (225 aa).

An MPN domain is found at 103–225 (ALANPDLVRR…TVSMAAQGHL (123 aa)). 3 residues coordinate Zn(2+): H174, H176, and D187. The short motif at 174–187 (HNHPGGTAAASAAD) is the JAMM motif element.

Belongs to the UPF0758 family.

The chain is UPF0758 protein BP1235 from Bordetella pertussis (strain Tohama I / ATCC BAA-589 / NCTC 13251).